The following is an 865-amino-acid chain: DNA mismatch repair protein MutS (865 aa).

609 to 616 (GPNMAGKS) is a binding site for ATP.

It belongs to the DNA mismatch repair MutS family.

Functionally, this protein is involved in the repair of mismatches in DNA. It is possible that it carries out the mismatch recognition step. This protein has a weak ATPase activity. This is DNA mismatch repair protein MutS from Leuconostoc citreum (strain KM20).